The following is a 1094-amino-acid chain: Isoleucine--tRNA ligase (1094 aa).

Residues 53–63 carry the 'HIGH' region motif; sequence PFANGLPHYGH. A 'KMSKS' region motif is present at residues 624 to 628; that stretch reads KLSKR. Lys-627 contacts ATP.

This sequence belongs to the class-I aminoacyl-tRNA synthetase family. IleS type 2 subfamily. As to quaternary structure, monomer. Requires Zn(2+) as cofactor.

Its subcellular location is the cytoplasm. It carries out the reaction tRNA(Ile) + L-isoleucine + ATP = L-isoleucyl-tRNA(Ile) + AMP + diphosphate. Catalyzes the attachment of isoleucine to tRNA(Ile). As IleRS can inadvertently accommodate and process structurally similar amino acids such as valine, to avoid such errors it has two additional distinct tRNA(Ile)-dependent editing activities. One activity is designated as 'pretransfer' editing and involves the hydrolysis of activated Val-AMP. The other activity is designated 'posttransfer' editing and involves deacylation of mischarged Val-tRNA(Ile). The chain is Isoleucine--tRNA ligase from Rickettsia felis (strain ATCC VR-1525 / URRWXCal2) (Rickettsia azadi).